Here is a 265-residue protein sequence, read N- to C-terminus: Tryptophan synthase alpha chain (265 aa).

Residues glutamate 49 and aspartate 60 each act as proton acceptor in the active site.

The protein belongs to the TrpA family. In terms of assembly, tetramer of two alpha and two beta chains.

The catalysed reaction is (1S,2R)-1-C-(indol-3-yl)glycerol 3-phosphate + L-serine = D-glyceraldehyde 3-phosphate + L-tryptophan + H2O. It functions in the pathway amino-acid biosynthesis; L-tryptophan biosynthesis; L-tryptophan from chorismate: step 5/5. The alpha subunit is responsible for the aldol cleavage of indoleglycerol phosphate to indole and glyceraldehyde 3-phosphate. In Desulfosudis oleivorans (strain DSM 6200 / JCM 39069 / Hxd3) (Desulfococcus oleovorans), this protein is Tryptophan synthase alpha chain.